The chain runs to 701 residues: Elongation factor G (701 aa).

One can recognise a tr-type G domain in the interval 11-287 (TKVRNIGIMA…AVIDYLPSPL (277 aa)). Residues 20–27 (AHIDAGKT), 84–88 (DTPGH), and 138–141 (NKMD) each bind GTP.

It belongs to the TRAFAC class translation factor GTPase superfamily. Classic translation factor GTPase family. EF-G/EF-2 subfamily.

The protein localises to the cytoplasm. Functionally, catalyzes the GTP-dependent ribosomal translocation step during translation elongation. During this step, the ribosome changes from the pre-translocational (PRE) to the post-translocational (POST) state as the newly formed A-site-bound peptidyl-tRNA and P-site-bound deacylated tRNA move to the P and E sites, respectively. Catalyzes the coordinated movement of the two tRNA molecules, the mRNA and conformational changes in the ribosome. The polypeptide is Elongation factor G (Mycobacterium avium (strain 104)).